Here is a 205-residue protein sequence, read N- to C-terminus: Nascent polypeptide-associated complex subunit alpha-like protein (205 aa).

2 disordered regions span residues 1–73 (MPSV…RKAM) and 137–166 (KAPN…DTGV). A compositionally biased stretch (basic and acidic residues) spans 20–29 (EQQELEHSDE). Residues 30 to 51 (PILEDDEDDDDEEDDNDEDDAQ) show a composition bias toward acidic residues. Residues 56 to 66 (GEGKSKQSRSE) show a composition bias toward basic and acidic residues. An NAC-A/B domain is found at 63–128 (SRSEKKCRKA…AKIEDLSSQL (66 aa)). Acidic residues predominate over residues 155–165 (QEDEDEVDDTG). In terms of domain architecture, UBA spans 166–203 (VEPKDIELVMTQAGVSRTKAVKALKAADGDIVSAIMDL).

The protein belongs to the NAC-alpha family.

Its function is as follows. May promote appropriate targeting of ribosome-nascent polypeptide complexes. This is Nascent polypeptide-associated complex subunit alpha-like protein from Pinus taeda (Loblolly pine).